A 339-amino-acid polypeptide reads, in one-letter code: Ketol-acid reductoisomerase (NADP(+)) (339 aa).

In terms of domain architecture, KARI N-terminal Rossmann spans 1 to 182 (MKVYYDADCD…GGGRSGIIET (182 aa)). Residues 24-27 (YGSQ), Arg48, Ser51, Ser53, and 83-86 (DEHQ) each bind NADP(+). His108 is a catalytic residue. Position 134 (Gly134) interacts with NADP(+). Residues 183 to 328 (NFREECETDL…AKLRAMMPWI (146 aa)) enclose the KARI C-terminal knotted domain. The Mg(2+) site is built by Asp191, Glu195, Glu227, and Glu231. Ser252 contacts substrate.

The protein belongs to the ketol-acid reductoisomerase family. It depends on Mg(2+) as a cofactor.

The catalysed reaction is (2R)-2,3-dihydroxy-3-methylbutanoate + NADP(+) = (2S)-2-acetolactate + NADPH + H(+). It carries out the reaction (2R,3R)-2,3-dihydroxy-3-methylpentanoate + NADP(+) = (S)-2-ethyl-2-hydroxy-3-oxobutanoate + NADPH + H(+). The protein operates within amino-acid biosynthesis; L-isoleucine biosynthesis; L-isoleucine from 2-oxobutanoate: step 2/4. It functions in the pathway amino-acid biosynthesis; L-valine biosynthesis; L-valine from pyruvate: step 2/4. Functionally, involved in the biosynthesis of branched-chain amino acids (BCAA). Catalyzes an alkyl-migration followed by a ketol-acid reduction of (S)-2-acetolactate (S2AL) to yield (R)-2,3-dihydroxy-isovalerate. In the isomerase reaction, S2AL is rearranged via a Mg-dependent methyl migration to produce 3-hydroxy-3-methyl-2-ketobutyrate (HMKB). In the reductase reaction, this 2-ketoacid undergoes a metal-dependent reduction by NADPH to yield (R)-2,3-dihydroxy-isovalerate. In Novosphingobium aromaticivorans (strain ATCC 700278 / DSM 12444 / CCUG 56034 / CIP 105152 / NBRC 16084 / F199), this protein is Ketol-acid reductoisomerase (NADP(+)).